Consider the following 253-residue polypeptide: 5'/3'-nucleotidase SurE (253 aa).

Residues Asp-8, Asp-9, Ser-39, and Asn-92 each coordinate a divalent metal cation.

It belongs to the SurE nucleotidase family. Requires a divalent metal cation as cofactor.

Its subcellular location is the cytoplasm. The catalysed reaction is a ribonucleoside 5'-phosphate + H2O = a ribonucleoside + phosphate. The enzyme catalyses a ribonucleoside 3'-phosphate + H2O = a ribonucleoside + phosphate. It catalyses the reaction [phosphate](n) + H2O = [phosphate](n-1) + phosphate + H(+). In terms of biological role, nucleotidase with a broad substrate specificity as it can dephosphorylate various ribo- and deoxyribonucleoside 5'-monophosphates and ribonucleoside 3'-monophosphates with highest affinity to 3'-AMP. Also hydrolyzes polyphosphate (exopolyphosphatase activity) with the preference for short-chain-length substrates (P20-25). Might be involved in the regulation of dNTP and NTP pools, and in the turnover of 3'-mononucleotides produced by numerous intracellular RNases (T1, T2, and F) during the degradation of various RNAs. The polypeptide is 5'/3'-nucleotidase SurE (Shigella dysenteriae serotype 1 (strain Sd197)).